Reading from the N-terminus, the 117-residue chain is Nuclear transition protein 2 (117 aa).

Residues 1–117 are disordered; sequence MDTKMQSLPT…KRRSSGRRYK (117 aa). The segment covering 7–26 has biased composition (low complexity); that stretch reads SLPTTHPHPHSSSRPQSHTS. Zn(2+)-binding residues include His-12, His-14, His-16, His-24, Cys-32, Cys-34, Cys-38, and Cys-41. The segment covering 44–53 has biased composition (low complexity); that stretch reads AGHAGSSSSP. 2 stretches are compositionally biased toward basic residues: residues 60–77 and 93–117; these read KHPK…RPSH and SKRK…RRYK. Residues 90–98 carry the Nuclear localization signal motif; it reads GKVSKRKAV. Ser-112 is modified (phosphoserine).

Belongs to the nuclear transition protein 2 family.

The protein resides in the nucleus. It localises to the chromosome. In terms of biological role, plays a key role in the replacement of histones to protamine in the elongating spermatids of mammals. In condensing spermatids, loaded onto the nucleosomes, where it promotes the recruitment and processing of protamines, which are responsible for histone eviction. The histone H2AB1-H2BC1/TH2B dimer is required for loading of TNP2 onto chromatin. In Mus musculus (Mouse), this protein is Nuclear transition protein 2.